The following is a 432-amino-acid chain: E3 ubiquitin-protein ligase RNF135 (432 aa).

Residues C21 to R63 form an RING-type zinc finger. The segment at G95–E121 is disordered. Positions P102–A114 are enriched in low complexity. Coiled coils occupy residues E121–R156 and D191–T216. A B30.2/SPRY domain is found at P241–V432.

In terms of assembly, homodimer. Interacts (homodimer) with RIGI (double-stranded RNA-bound oligomeric form); involved in both RIGI ubiquitination, oligomerization into filaments associated with viral RNAs and the bridging of these filaments. Interacts with UBE2D3 and UBE2N; E2 ubiquitin ligases involved in RNF135-mediated ubiquitination of RIGI and activation of the RIG-I signaling pathway. Interacts with PCBP2. (Microbial infection) Cleaved and inactivated by hepatitis C virus NS3/NS4A. In terms of tissue distribution, expressed in skeletal muscle, spleen, kidney, placenta, prostate, stomach, thyroid and tongue. Also weakly expressed in heart, thymus, liver and lung.

It is found in the cytoplasm. The protein resides in the stress granule. It carries out the reaction S-ubiquitinyl-[E2 ubiquitin-conjugating enzyme]-L-cysteine + [acceptor protein]-L-lysine = [E2 ubiquitin-conjugating enzyme]-L-cysteine + N(6)-ubiquitinyl-[acceptor protein]-L-lysine.. Its pathway is protein modification; protein ubiquitination. In terms of biological role, E2-dependent E3 ubiquitin-protein ligase that functions as a RIGI coreceptor in the sensing of viral RNAs in cell cytoplasm and the activation of the antiviral innate immune response. Together with the UBE2D3, UBE2N and UB2V1 E2 ligases, catalyzes the 'Lys-63'-linked polyubiquitination of RIGI oligomerized on viral RNAs, an essential step in the activation of the RIG-I signaling pathway. Through a ubiquitin-independent parallel mechanism, which consists in bridging RIGI filaments forming on longer viral RNAs, further activates the RIG-I signaling pathway. This second mechanism that synergizes with the ubiquitin-dependent one would thereby allow an RNA length-dependent regulation of the RIG-I signaling pathway. Associated with the E2 ligase UBE2N, also constitutively synthesizes unanchored 'Lys-63'-linked polyubiquitin chains that may also activate the RIG-I signaling pathway. This chain is E3 ubiquitin-protein ligase RNF135, found in Homo sapiens (Human).